A 293-amino-acid chain; its full sequence is Ribonuclease HIII (293 aa).

The RNase H type-2 domain occupies 78-293; it reads LPLIGTDEVG…TEKAKKRLER (216 aa). A divalent metal cation-binding residues include Asp84, Glu85, and Asp187.

Belongs to the RNase HII family. RnhC subfamily. The cofactor is Mn(2+). Mg(2+) serves as cofactor.

It is found in the cytoplasm. It carries out the reaction Endonucleolytic cleavage to 5'-phosphomonoester.. In terms of biological role, endonuclease that specifically degrades the RNA of RNA-DNA hybrids. This is Ribonuclease HIII from Streptococcus pneumoniae (strain Taiwan19F-14).